The following is a 400-amino-acid chain: Protein screw (400 aa).

Residues 1-16 form the signal peptide; sequence MLNVFFLTSLFYAASA. The propeptide occupies 17-277; the sequence is TTYVTTNNHI…RFKRDLEKRR (261 aa). N-linked (GlcNAc...) asparagine glycans are attached at residues asparagine 165, asparagine 189, asparagine 201, asparagine 304, and asparagine 342. 3 cysteine pairs are disulfide-bonded: cysteine 300-cysteine 365, cysteine 329-cysteine 397, and cysteine 333-cysteine 399.

Belongs to the TGF-beta family. In terms of assembly, heterodimers of scw/dpp are the active subunit, dpp/dpp homodimers elicit a basal response and scw/scw homodimers alone are ineffective in specifying a dorsal pattern. As to expression, ubiquitously expressed during early stages of embryogenesis, but the effect on development appears graded and is restricted to the dorsal side of the embryo.

The protein localises to the secreted. In terms of biological role, part of the signal that specifies dorsal cell fates in the embryo. Acts together with dpp. This is Protein screw (scw) from Drosophila melanogaster (Fruit fly).